Here is a 368-residue protein sequence, read N- to C-terminus: Core-capsid bridging protein (368 aa).

Disordered stretches follow at residues 17-49 and 307-340; these read EIYGPPKKEEQDYKPRKLKRVKKKKKDDDDELD and GYRGYTYRPRRRATTRRRTTTGTRRRRRRRQPVL. Positions 22-31 are enriched in basic and acidic residues; it reads PKKEEQDYKP. Basic residues-rich tracts occupy residues 32-41 and 314-337; these read RKLKRVKKKK and RPRRRATTRRRTTTGTRRRRRRRQ.

This sequence belongs to the adenoviridae core-capsid bridging protein family. Monomer. Homodimer. Exists in equilibrium between monomers and dimers in solution. Interacts with the histone-like nucleoprotein; this interactions bridge the virus core to the capsid. Interacts with core protein X; this interactions bridge the virus core to the capsid. Interacts with the endosome lysis protein VI; this interactions bridge the virus core to the capsid. Interacts with the peripentonal hexons. Interacts with host NPM1; this interaction might play a role in virus assembly. In terms of processing, during virion entry, is ubiquitinated at the nuclear pore complex by host MIB1. This dissociates viral genomic DNA from capsid and allows genome delivery into nucleus for infection.

Its subcellular location is the virion. It is found in the host nucleus. The protein localises to the host nucleolus. Its function is as follows. Associates loosely with the viral DNA to form an outer shell around the nucleoprotein-DNA complex and links it with the capsid by binding the endosome lysis protein. During entry, secures the viral genome in the capsid until it reaches the nuclear pore complex, preventing innate immunity responses. Dissociates from the viral genome at nuclear pore. Might be involved in nuclear capsid assembly of the viral particles through its association with NPM1/nucleophosmin. The chain is Core-capsid bridging protein from Human adenovirus C serotype 5 (HAdV-5).